The following is a 193-amino-acid chain: Flagellin B1 (193 aa).

Residues 1–12 (MFEFITDEDERG) constitute a propeptide that is removed on maturation.

This sequence belongs to the archaeal flagellin family. In terms of processing, glycosylated.

The protein resides in the archaeal flagellum. Functionally, flagellin is the subunit protein which polymerizes to form the filaments of archaeal flagella. The chain is Flagellin B1 (flaB1) from Halobacterium salinarum (strain ATCC 700922 / JCM 11081 / NRC-1) (Halobacterium halobium).